Consider the following 557-residue polypeptide: Formate--tetrahydrofolate ligase (557 aa).

Position 67 to 74 (Thr67 to Ser74) interacts with ATP.

The protein belongs to the formate--tetrahydrofolate ligase family.

It catalyses the reaction (6S)-5,6,7,8-tetrahydrofolate + formate + ATP = (6R)-10-formyltetrahydrofolate + ADP + phosphate. The protein operates within one-carbon metabolism; tetrahydrofolate interconversion. This Latilactobacillus sakei subsp. sakei (strain 23K) (Lactobacillus sakei subsp. sakei) protein is Formate--tetrahydrofolate ligase.